The chain runs to 284 residues: MDSYYKNKKKINFSKMHGLKNDFMVINCIKKNVFLTSHIIKKLSNRYTGIGFDQLLLVEKSNSLLTDFHYRIFNANGNEVEQCGNGARCFGLFLLLKGLTNKKKILISTKKKPLTIEFLTENMIKVNMNEPDFKFYNLSSLQNVLDNNFSIKLINENLICNLVSIGNPHCIIKVQSIKNAPVNIIGDNIEKNPIFPEGVNVSFMEILNKKHIKLRVYERNVGETKACGSAACAAVAVGIAQKLLSDTVHVELLGGKLIIIWKGFGTPLYMVGPAKHVYDGYIYI.

3 residues coordinate substrate: N21, Q54, and N74. Catalysis depends on C83, which acts as the Proton donor. Residues G84–N85, N167, N200, and E218–R219 each bind substrate. C227 (proton acceptor) is an active-site residue. Position 228–229 (G228–S229) interacts with substrate.

This sequence belongs to the diaminopimelate epimerase family. Homodimer.

It localises to the cytoplasm. It carries out the reaction (2S,6S)-2,6-diaminopimelate = meso-2,6-diaminopimelate. The protein operates within amino-acid biosynthesis; L-lysine biosynthesis via DAP pathway; DL-2,6-diaminopimelate from LL-2,6-diaminopimelate: step 1/1. In terms of biological role, catalyzes the stereoinversion of LL-2,6-diaminopimelate (L,L-DAP) to meso-diaminopimelate (meso-DAP), a precursor of L-lysine and an essential component of the bacterial peptidoglycan. This Buchnera aphidicola subsp. Acyrthosiphon pisum (strain 5A) protein is Diaminopimelate epimerase.